A 547-amino-acid chain; its full sequence is Calcium-dependent protein kinase 16 (547 aa).

Residues 1 to 53 (MGNCCRSPAAAAREDVKTSHFPASTGGGKKKPHQARNGGGGGGGGGGGGWEKK) form a disordered region. A lipid anchor (N-myristoyl glycine) is attached at Gly-2. A compositionally biased stretch (gly residues) spans 37–49 (NGGGGGGGGGGGG). In terms of domain architecture, Protein kinase spans 73–331 (YALDRELGRG…AKQVLEHTWL (259 aa)). ATP-binding positions include 79–87 (LGRGEFGVT) and Lys-102. Asp-197 (proton acceptor) is an active-site residue. Residues 337–367 (APNVPLGDIVKSRLKQFSRMNRFKRRALRVI) are autoinhibitory domain. EF-hand domains follow at residues 374 to 409 (EEVE…FGSH), 410 to 445 (LAES…LQRM), 446 to 481 (ANGE…DGAT), and 482 to 517 (DIME…GTDW). Ca(2+) contacts are provided by Asp-387, Asp-389, Asp-391, Glu-398, Asp-423, Asn-425, Glu-434, Asp-459, Asp-461, Asn-463, Tyr-465, Glu-470, Asp-495, Asp-497, Asp-499, Lys-501, and Glu-506.

It belongs to the protein kinase superfamily. Ser/Thr protein kinase family. CDPK subfamily.

It is found in the membrane. It catalyses the reaction L-seryl-[protein] + ATP = O-phospho-L-seryl-[protein] + ADP + H(+). It carries out the reaction L-threonyl-[protein] + ATP = O-phospho-L-threonyl-[protein] + ADP + H(+). Its activity is regulated as follows. Activated by calcium. Autophosphorylation may play an important role in the regulation of the kinase activity. Functionally, may play a role in signal transduction pathways that involve calcium as a second messenger. The protein is Calcium-dependent protein kinase 16 of Oryza sativa subsp. japonica (Rice).